Reading from the N-terminus, the 317-residue chain is Cytochrome f (317 aa).

Positions 1–34 (MINFKKQIMKKTTFFLCAMLLVSSILIAPRSSLA) are cleaved as a signal peptide. Heme is bound by residues Y35, C55, C58, and H59. A helical membrane pass occupies residues 284–304 (IIGLIAFFIGVGLTQILLVLK).

This sequence belongs to the cytochrome f family. In terms of assembly, the 4 large subunits of the cytochrome b6-f complex are cytochrome b6, subunit IV (17 kDa polypeptide, PetD), cytochrome f and the Rieske protein, while the 4 small subunits are PetG, PetL, PetM and PetN. The complex functions as a dimer. Heme is required as a cofactor.

It is found in the cellular thylakoid membrane. Component of the cytochrome b6-f complex, which mediates electron transfer between photosystem II (PSII) and photosystem I (PSI), cyclic electron flow around PSI, and state transitions. This chain is Cytochrome f, found in Prochlorococcus marinus (strain MIT 9515).